A 333-amino-acid polypeptide reads, in one-letter code: Polygalacturonase inhibitor (333 aa).

Positions 1 to 27 (METSKLFLLSSSLLLVLLATRPCPSLS) are cleaved as a signal peptide. 2 cysteine pairs are disulfide-bonded: Cys-30–Cys-60 and Cys-61–Cys-68. LRR repeat units lie at residues 72–96 (THRI…VGDL), 97–120 (PFLE…AIAK), 121–144 (LKHL…FFSE), 145–169 (LKNL…LSLL), 170–192 (PNLG…SFGK), 194–220 (AGST…GFDP), 221–240 (NVMD…FFNA), 241–263 (NKST…RVEF), 264–288 (PKSL…MTSL), and 290–312 (LQFL…KLQS). Residues Asn-109, Asn-133, Asn-147, and Asn-157 are each glycosylated (N-linked (GlcNAc...) asparagine). Residue Asn-241 is glycosylated (N-linked (GlcNAc...) asparagine). Asn-294 carries an N-linked (GlcNAc...) asparagine glycan. Cystine bridges form between Cys-301-Cys-323 and Cys-325-Cys-332.

It belongs to the polygalacturonase-inhibiting protein family.

Its subcellular location is the secreted. The protein localises to the cell wall. The protein resides in the membrane. Functionally, inhibitor of fungal polygalacturonase. It is an important factor for plant resistance to phytopathogenic fungi. The sequence is that of Polygalacturonase inhibitor (pgip) from Vitis vinifera (Grape).